A 131-amino-acid chain; its full sequence is Small ribosomal subunit protein uS8 (131 aa).

This sequence belongs to the universal ribosomal protein uS8 family. Part of the 30S ribosomal subunit. Contacts proteins S5 and S12.

In terms of biological role, one of the primary rRNA binding proteins, it binds directly to 16S rRNA central domain where it helps coordinate assembly of the platform of the 30S subunit. The sequence is that of Small ribosomal subunit protein uS8 from Campylobacter jejuni subsp. jejuni serotype O:23/36 (strain 81-176).